The primary structure comprises 496 residues: Aspartyl/glutamyl-tRNA(Asn/Gln) amidotransferase subunit B (496 aa).

Belongs to the GatB/GatE family. GatB subfamily. In terms of assembly, heterotrimer of A, B and C subunits.

The enzyme catalyses L-glutamyl-tRNA(Gln) + L-glutamine + ATP + H2O = L-glutaminyl-tRNA(Gln) + L-glutamate + ADP + phosphate + H(+). It catalyses the reaction L-aspartyl-tRNA(Asn) + L-glutamine + ATP + H2O = L-asparaginyl-tRNA(Asn) + L-glutamate + ADP + phosphate + 2 H(+). In terms of biological role, allows the formation of correctly charged Asn-tRNA(Asn) or Gln-tRNA(Gln) through the transamidation of misacylated Asp-tRNA(Asn) or Glu-tRNA(Gln) in organisms which lack either or both of asparaginyl-tRNA or glutaminyl-tRNA synthetases. The reaction takes place in the presence of glutamine and ATP through an activated phospho-Asp-tRNA(Asn) or phospho-Glu-tRNA(Gln). The chain is Aspartyl/glutamyl-tRNA(Asn/Gln) amidotransferase subunit B from Picosynechococcus sp. (strain ATCC 27264 / PCC 7002 / PR-6) (Agmenellum quadruplicatum).